A 184-amino-acid chain; its full sequence is Lipocalin-15 (184 aa).

A signal peptide spans 1–20; the sequence is MMSFLLGAILTLLWAPTAQA. A disulfide bridge links cysteine 83 with cysteine 176.

Belongs to the calycin superfamily. Lipocalin family.

It localises to the secreted. This chain is Lipocalin-15 (LCN15), found in Homo sapiens (Human).